The primary structure comprises 365 residues: Aminomethyltransferase (365 aa).

Belongs to the GcvT family. As to quaternary structure, the glycine cleavage system is composed of four proteins: P, T, L and H.

The enzyme catalyses N(6)-[(R)-S(8)-aminomethyldihydrolipoyl]-L-lysyl-[protein] + (6S)-5,6,7,8-tetrahydrofolate = N(6)-[(R)-dihydrolipoyl]-L-lysyl-[protein] + (6R)-5,10-methylene-5,6,7,8-tetrahydrofolate + NH4(+). The glycine cleavage system catalyzes the degradation of glycine. The polypeptide is Aminomethyltransferase (Synechococcus sp. (strain CC9902)).